The chain runs to 355 residues: Peptide chain release factor 1 (355 aa).

Q233 is subject to N5-methylglutamine.

This sequence belongs to the prokaryotic/mitochondrial release factor family. In terms of processing, methylated by PrmC. Methylation increases the termination efficiency of RF1.

It is found in the cytoplasm. Functionally, peptide chain release factor 1 directs the termination of translation in response to the peptide chain termination codons UAG and UAA. In Bacillus cereus (strain ATCC 14579 / DSM 31 / CCUG 7414 / JCM 2152 / NBRC 15305 / NCIMB 9373 / NCTC 2599 / NRRL B-3711), this protein is Peptide chain release factor 1.